Reading from the N-terminus, the 363-residue chain is MSGEGKRLMVMAGGTGGHVFPGLAVAHHLMAQGWQVRWLGTADRMEADLVPKHGIEIDFIRISGLRGKGIWAQLSAPIRIFQAVRQARAIMRRYQPDVVLGMGGYVSGPGGLAAWLCGIPVVLHEQNGIAGLTNRWLSHIAKKVLQAFPGAFPKADVVGNPVRTDVLALPVPETRLADRSGPVRVLVVGGSQGARVLNQTLPGVAAQLGERVTIWHQVGKGALSTVQQAYQDVGQTQHKITEFIDDMAAAYAWADVVVCRSGALTVSEIAAAGLPALFVPFQHKDRQQYWNALPLEKAGAAKIIEQPQFNVAAVSEVLSGWDRATLLTMAQKARAVAIPDATDRVAAEVSAAAGSRATHVAHG.

UDP-N-acetyl-alpha-D-glucosamine contacts are provided by residues 15–17 (TGG), Asn127, Arg163, Ser191, Ile244, 263–268 (ALTVSE), and Gln288.

This sequence belongs to the glycosyltransferase 28 family. MurG subfamily.

It localises to the cell inner membrane. It catalyses the reaction di-trans,octa-cis-undecaprenyl diphospho-N-acetyl-alpha-D-muramoyl-L-alanyl-D-glutamyl-meso-2,6-diaminopimeloyl-D-alanyl-D-alanine + UDP-N-acetyl-alpha-D-glucosamine = di-trans,octa-cis-undecaprenyl diphospho-[N-acetyl-alpha-D-glucosaminyl-(1-&gt;4)]-N-acetyl-alpha-D-muramoyl-L-alanyl-D-glutamyl-meso-2,6-diaminopimeloyl-D-alanyl-D-alanine + UDP + H(+). It functions in the pathway cell wall biogenesis; peptidoglycan biosynthesis. Its function is as follows. Cell wall formation. Catalyzes the transfer of a GlcNAc subunit on undecaprenyl-pyrophosphoryl-MurNAc-pentapeptide (lipid intermediate I) to form undecaprenyl-pyrophosphoryl-MurNAc-(pentapeptide)GlcNAc (lipid intermediate II). This Pectobacterium carotovorum subsp. carotovorum (strain PC1) protein is UDP-N-acetylglucosamine--N-acetylmuramyl-(pentapeptide) pyrophosphoryl-undecaprenol N-acetylglucosamine transferase.